Reading from the N-terminus, the 434-residue chain is ATP-dependent protease ATPase subunit HslU (434 aa).

ATP-binding positions include Ile-18, 60–65 (GVGKTE), Asp-247, Glu-312, and Arg-384.

It belongs to the ClpX chaperone family. HslU subfamily. A double ring-shaped homohexamer of HslV is capped on each side by a ring-shaped HslU homohexamer. The assembly of the HslU/HslV complex is dependent on binding of ATP.

Its subcellular location is the cytoplasm. Functionally, ATPase subunit of a proteasome-like degradation complex; this subunit has chaperone activity. The binding of ATP and its subsequent hydrolysis by HslU are essential for unfolding of protein substrates subsequently hydrolyzed by HslV. HslU recognizes the N-terminal part of its protein substrates and unfolds these before they are guided to HslV for hydrolysis. In Sinorhizobium fredii (strain NBRC 101917 / NGR234), this protein is ATP-dependent protease ATPase subunit HslU.